The sequence spans 350 residues: tRNA N6-adenosine threonylcarbamoyltransferase (350 aa).

Residues His-115 and His-119 each coordinate Fe cation. Substrate contacts are provided by residues 137 to 141 (IISGG), Asp-170, Gly-183, and Asn-281. Position 309 (Asp-309) interacts with Fe cation.

It belongs to the KAE1 / TsaD family. Requires Fe(2+) as cofactor.

It is found in the cytoplasm. The catalysed reaction is L-threonylcarbamoyladenylate + adenosine(37) in tRNA = N(6)-L-threonylcarbamoyladenosine(37) in tRNA + AMP + H(+). Functionally, required for the formation of a threonylcarbamoyl group on adenosine at position 37 (t(6)A37) in tRNAs that read codons beginning with adenine. Is involved in the transfer of the threonylcarbamoyl moiety of threonylcarbamoyl-AMP (TC-AMP) to the N6 group of A37, together with TsaE and TsaB. TsaD likely plays a direct catalytic role in this reaction. The sequence is that of tRNA N6-adenosine threonylcarbamoyltransferase from Ehrlichia canis (strain Jake).